Here is a 317-residue protein sequence, read N- to C-terminus: Succinate receptor 1 (317 aa).

Residues 1–27 (MAQNLSCENWLALENILKKYYLSAFYG) lie on the Extracellular side of the membrane. Asn-4 is a glycosylation site (N-linked (GlcNAc...) asparagine). The helical transmembrane segment at 28–48 (IEFIVGMLGNFTVVFGYLFCM) threads the bilayer. At 49–55 (KNWNSSN) the chain is on the cytoplasmic side. A helical membrane pass occupies residues 56 to 76 (VYLFNLSISDLAFLCTLPMLI). Over 77–99 (RSYATGNWTYGDVLCISNRYVLH) the chain is Extracellular. The cysteines at positions 91 and 168 are disulfide-linked. The helical transmembrane segment at 100–120 (ANLYTSILFLTFISIDRYLLM) threads the bilayer. Topologically, residues 121–133 (KFPFREHILQKKE) are cytoplasmic. Residues 134-154 (FAILISLAVWVLVTLEVLPML) traverse the membrane as a helical segment. Over 155 to 181 (TFITSTPIEKGDSCVDYASSGNPKYSL) the chain is Extracellular. Residues 182 to 202 (IYSLCLTLLGFLIPLSVMCFF) traverse the membrane as a helical segment. Topologically, residues 203–226 (YYKMVVFLKKRSQQQATVLSLNKP) are cytoplasmic. Residues 227–247 (LRLVVLAVVIFSVLFTPYHIM) traverse the membrane as a helical segment. Residues 248–276 (RNVRIASRLDSWPQGCSQKAIKCLYILTR) lie on the Extracellular side of the membrane. The helical transmembrane segment at 277-297 (PLAFLNSAVNPIFYFLVGDHF) threads the bilayer. Topologically, residues 298-317 (RDMLFSKLRQYFKSLTSFRL) are cytoplasmic.

The protein belongs to the G-protein coupled receptor 1 family. In terms of tissue distribution, expressed in retina.

It localises to the cell membrane. In terms of biological role, g protein-coupled receptor for succinate able to mediate signaling through Gq/GNAQ or Gi/GNAI second messengers depending on the cell type and the processes regulated. Succinate-SUCNR1 signaling serves as a link between metabolic stress, inflammation and energy homeostasisn. In macrophages, plays a range of immune-regulatory roles. During inflammation, succinate-SUCNR1 signaling may act as an anti-inflammatory mediator or boost inflammation depending on the inflammatory status of cells. Hyperpolarizes M2 macrophages versus M1 phenotype through Gq signaling by regulating the transcription of genes involved in immune function. In activated M1 macrophages, plays a pro-inflammatory role in response to LPS. Expressed in dendritic cells, where it is involved in the sensing of immunological danger and enhances immunity. Mediates succinate triggered intracelleular calcium mobilization, induces migratory responses and acts in synergy with Toll-like receptor ligands for the production of proinflammatory cytokines as well as an enhancement of antigen-specific activation of helper T cells. In the small intestine, mediates the activation of tuft cells by dietary succinate and triggers type 2 immunity. In adipocytes, plays an important role in the control of energy metabolism. In response to succinate, controls leptin expression in an AMPK-JNK-CEBPA-dependent as well as circadian clock-regulated manner. In muscle tissue, is expressed in non-muscle cells and coordinates muscle remodeling in response to the succinate produced during exercise training in a paracrine manner. In retina, acts as a mediator of vessel growth during retinal development. In response to succinate, regulates the production of angiogenic factors, including VEGF, by retinal ganglion neurons. The sequence is that of Succinate receptor 1 (Sucnr1) from Rattus norvegicus (Rat).